The sequence spans 218 residues: Transmembrane gamma-carboxyglutamic acid protein 1 (218 aa).

A propeptide spanning residues 1–20 is cleaved from the precursor; it reads MGRVFLTGEKANSVLKRYPR. The Gla domain occupies 20 to 66; the sequence is RANGFFEEIRQGNIERECKEEFCTFEEAREAFENNEKTKEFWSTYTK. The Extracellular portion of the chain corresponds to 21–80; sequence ANGFFEEIRQGNIERECKEEFCTFEEAREAFENNEKTKEFWSTYTKAQQGESNRGSDWFQ. The cysteines at positions 37 and 42 are disulfide-linked. Residues 81–101 form a helical membrane-spanning segment; sequence FYLTFPLIFGLFIILLVIFLI. The Cytoplasmic segment spans residues 102-218; it reads WRCFLRNKTR…PMVPVVTTIK (117 aa). The segment at 161-195 is disordered; that stretch reads TRLSNCDPPPTYEEATGQVNLQRSETEPHLDPPPE.

Gla residues are produced after subsequent post-translational modifications of glutamate by a vitamin K-dependent gamma-carboxylase.

Its subcellular location is the membrane. The polypeptide is Transmembrane gamma-carboxyglutamic acid protein 1 (PRRG1) (Pongo abelii (Sumatran orangutan)).